The following is a 119-amino-acid chain: Ribosome-binding factor A (119 aa).

This sequence belongs to the RbfA family. As to quaternary structure, monomer. Binds 30S ribosomal subunits, but not 50S ribosomal subunits or 70S ribosomes.

It is found in the cytoplasm. In terms of biological role, one of several proteins that assist in the late maturation steps of the functional core of the 30S ribosomal subunit. Associates with free 30S ribosomal subunits (but not with 30S subunits that are part of 70S ribosomes or polysomes). Required for efficient processing of 16S rRNA. May interact with the 5'-terminal helix region of 16S rRNA. This Wolinella succinogenes (strain ATCC 29543 / DSM 1740 / CCUG 13145 / JCM 31913 / LMG 7466 / NCTC 11488 / FDC 602W) (Vibrio succinogenes) protein is Ribosome-binding factor A.